Reading from the N-terminus, the 366-residue chain is Ribosomal RNA large subunit methyltransferase M (366 aa).

S-adenosyl-L-methionine contacts are provided by residues Ser188, 221–224, Asp240, Asp260, and Asp277; that span reads CPGG. The Proton acceptor role is filled by Lys306.

Belongs to the class I-like SAM-binding methyltransferase superfamily. RNA methyltransferase RlmE family. RlmM subfamily. In terms of assembly, monomer.

It localises to the cytoplasm. It catalyses the reaction cytidine(2498) in 23S rRNA + S-adenosyl-L-methionine = 2'-O-methylcytidine(2498) in 23S rRNA + S-adenosyl-L-homocysteine + H(+). Catalyzes the 2'-O-methylation at nucleotide C2498 in 23S rRNA. This is Ribosomal RNA large subunit methyltransferase M from Photorhabdus laumondii subsp. laumondii (strain DSM 15139 / CIP 105565 / TT01) (Photorhabdus luminescens subsp. laumondii).